Here is a 115-residue protein sequence, read N- to C-terminus: Large ribosomal subunit protein uL24 (115 aa).

It belongs to the universal ribosomal protein uL24 family. In terms of assembly, part of the 50S ribosomal subunit.

Functionally, one of two assembly initiator proteins, it binds directly to the 5'-end of the 23S rRNA, where it nucleates assembly of the 50S subunit. Its function is as follows. One of the proteins that surrounds the polypeptide exit tunnel on the outside of the subunit. This Amoebophilus asiaticus (strain 5a2) protein is Large ribosomal subunit protein uL24.